The chain runs to 361 residues: Histidinol-phosphate aminotransferase (361 aa).

Lys224 carries the post-translational modification N6-(pyridoxal phosphate)lysine.

This sequence belongs to the class-II pyridoxal-phosphate-dependent aminotransferase family. Histidinol-phosphate aminotransferase subfamily. In terms of assembly, homodimer. It depends on pyridoxal 5'-phosphate as a cofactor.

It carries out the reaction L-histidinol phosphate + 2-oxoglutarate = 3-(imidazol-4-yl)-2-oxopropyl phosphate + L-glutamate. It participates in amino-acid biosynthesis; L-histidine biosynthesis; L-histidine from 5-phospho-alpha-D-ribose 1-diphosphate: step 7/9. The protein is Histidinol-phosphate aminotransferase of Limosilactobacillus fermentum (strain NBRC 3956 / LMG 18251) (Lactobacillus fermentum).